Reading from the N-terminus, the 488-residue chain is Glycogen synthase (488 aa).

K16 is an ADP-alpha-D-glucose binding site.

Belongs to the glycosyltransferase 1 family. Bacterial/plant glycogen synthase subfamily.

It carries out the reaction [(1-&gt;4)-alpha-D-glucosyl](n) + ADP-alpha-D-glucose = [(1-&gt;4)-alpha-D-glucosyl](n+1) + ADP + H(+). It functions in the pathway glycan biosynthesis; glycogen biosynthesis. Functionally, synthesizes alpha-1,4-glucan chains using ADP-glucose. The protein is Glycogen synthase of Marinobacter nauticus (strain ATCC 700491 / DSM 11845 / VT8) (Marinobacter aquaeolei).